Here is a 211-residue protein sequence, read N- to C-terminus: Probable cytokinin riboside 5'-monophosphate phosphoribohydrolase LOGL3 (211 aa).

Residues glutamate 84, 102-103, 119-125, and threonine 131 contribute to the substrate site; these read RK and GYGTLEE.

It belongs to the LOG family. As to expression, expressed in roots, leaves, stems, tiller buds, shoot apex, immature inflorescences and flowers.

It catalyses the reaction N(6)-(dimethylallyl)adenosine 5'-phosphate + H2O = N(6)-dimethylallyladenine + D-ribose 5-phosphate. The catalysed reaction is 9-ribosyl-trans-zeatin 5'-phosphate + H2O = trans-zeatin + D-ribose 5-phosphate. Cytokinin-activating enzyme working in the direct activation pathway. Phosphoribohydrolase that converts inactive cytokinin nucleotides to the biologically active free-base forms. The sequence is that of Probable cytokinin riboside 5'-monophosphate phosphoribohydrolase LOGL3 (LOGL3) from Oryza sativa subsp. japonica (Rice).